We begin with the raw amino-acid sequence, 357 residues long: MSFSLGELAASLGATVQGDAGLIVKSIAPLDQAGADQLAFLSNPLYLNQAVSSGAGAIIVSPRDLETLESQGHAAGRNWLIAANPYAAFARVAQRFVALAARPVVPGIHRTASVEEGARVPASCSIGPNVTIEAGAVLGERVRIAGNSFVGADARIGDDTLLYANVSIYHGCVVGARCVLHSGVVIGADGFGFAPDFGPQGGEWVKIPQVGRAVIGDDVEIGANTAIDRGAMADTVVEQGCKIDNQVQIAHNVHVGAYTVIAGCAAISGSTKIGRYCIIGGAANFAGHLTIADRVTVSGGTSITKSITKPGGHFTSVFPFMPHGDWERNAAIVRGLTRMRERLQQLEQRVKDLQQQS.

His-251 (proton acceptor) is an active-site residue.

Belongs to the transferase hexapeptide repeat family. LpxD subfamily. Homotrimer.

It catalyses the reaction a UDP-3-O-[(3R)-3-hydroxyacyl]-alpha-D-glucosamine + a (3R)-hydroxyacyl-[ACP] = a UDP-2-N,3-O-bis[(3R)-3-hydroxyacyl]-alpha-D-glucosamine + holo-[ACP] + H(+). It participates in bacterial outer membrane biogenesis; LPS lipid A biosynthesis. Its function is as follows. Catalyzes the N-acylation of UDP-3-O-acylglucosamine using 3-hydroxyacyl-ACP as the acyl donor. Is involved in the biosynthesis of lipid A, a phosphorylated glycolipid that anchors the lipopolysaccharide to the outer membrane of the cell. This is UDP-3-O-acylglucosamine N-acyltransferase from Ralstonia pickettii (strain 12J).